The sequence spans 171 residues: MPLLDSFCVDHTIMNAPGVRLAKTMDTPKGDKICVFDLRFCKPNETMMPERGTHTLEHLFAGFMRDHLNREGVEIIDISPMGCRTGFYMSVIGEPSSQEVANAWEASMKDIINVLSQSDIPELNEYQCGSYKMHSLKEAHEIANNVLKAGIGIIDNESIKLDLHAKGLKKH.

Fe cation-binding residues include histidine 54, histidine 58, and cysteine 128.

The protein belongs to the LuxS family. In terms of assembly, homodimer. It depends on Fe cation as a cofactor.

The catalysed reaction is S-(5-deoxy-D-ribos-5-yl)-L-homocysteine = (S)-4,5-dihydroxypentane-2,3-dione + L-homocysteine. Involved in the synthesis of autoinducer 2 (AI-2) which is secreted by bacteria and is used to communicate both the cell density and the metabolic potential of the environment. The regulation of gene expression in response to changes in cell density is called quorum sensing. Catalyzes the transformation of S-ribosylhomocysteine (RHC) to homocysteine (HC) and 4,5-dihydroxy-2,3-pentadione (DPD). The protein is S-ribosylhomocysteine lyase of Campylobacter curvus (strain 525.92).